Here is an 863-residue protein sequence, read N- to C-terminus: MSVKAFDLVPAVEREQVMGEKVRINIECIECCGQHLYLGTNDCFIHHFLLEEHTTAKGKLAFNAQKLLHKYLGLKKPVVELKAASALERLIVLCDSAITVVDMVTLEPVPTGGAKLKGVTAFCINENPVTGDAFCVEMAVVLARRRAVQICTVHEDRVQMLKEVTTPEQPCALSLDGYNICLALSTQYMILNYSTGASQDLFPYDCEERKPIVKRIGREEFLLAAPGGLGMFANAEGISQRAPVSWSENVIAAAVCFPYVVALDEGFVTVHSMLDQQLKQTLSFRDGQLLQDFEGKVVVASSKAVYMLVPLPLERQIQDLLASHRVEEALTLTEAAQRNIPKEKYQILHRRILQQAGFIQFGQLQFLEAKEHFRKGQLDVRELISLYPLLLPASSSFTRCHPPLHEFADLNHLTQGDQEKVQRFKRFLISYLHEVRSSDIANGFHEDVDTALLKLYAETSHESLLDLLASENACLLADSAPWLEKHHKYYALGLLYHYNGQDAAALQMWVKIVNGDLQDSTRPDLFEYVVDFLSFCSNLDLVWRHADWALQKDQKIGVQIFTKRPTSEERRGQLNADDVITYLQKHSQALLLYLEHLVLEKKLQKEKYHTHLAVLYAEKVLGLISRPSTSEEQLSAARQKLQRLLKESNLYRVQLLLGKIQDSELLLLERATLHGKLEEHDKALHVLVHQLKDSSAAEEYCSWASASQDSSYRQNLFHQLLSVYLDPDVPGGAQTVAAVDLLNRHAEVFDAVRVLKLLPEDWSLPLLRPFLCGAMRATVHARCTSQVALGLARAQNLQLLHDRLKYRGGPVLVSEKKGCQLCHNTFSEPDCACLPGGTPVHINCVAKKALDLPHENAHHSNHT.

The region spanning 23–297 is the CNH domain; that stretch reads RINIECIECC…QLLQDFEGKV (275 aa). A CHCR repeat occupies 564 to 729; sequence RPTSEERRGQ…LLSVYLDPDV (166 aa).

This sequence belongs to the TRAP1 family. Component of the putative class C core vacuole/endosome tethering (CORVET) complex.

It is found in the cytoplasm. The protein resides in the early endosome. Its function is as follows. Plays a role in the TGF-beta signaling pathway. Plays a role in vesicle-mediated protein trafficking of the endocytic membrane transport pathway. Believed to act as a component of the putative CORVET endosomal tethering complexes which is proposed to be involved in the Rab5-to-Rab7 endosome conversion probably implicating MON1A/B, and via binding SNAREs and SNARE complexes to mediate tethering and docking events during SNARE-mediated membrane fusion. The CORVET complex is proposed to function as a Rab5 effector to mediate early endosome fusion probably in specific endosome subpopulations. The chain is Transforming growth factor-beta receptor-associated protein 1 homolog (tgfbrap1) from Danio rerio (Zebrafish).